Reading from the N-terminus, the 453-residue chain is Allantoinase (453 aa).

Residues His59, His61, Lys146, His186, His242, and Asp315 each contribute to the Zn(2+) site. Lys146 bears the N6-carboxylysine mark.

This sequence belongs to the metallo-dependent hydrolases superfamily. Allantoinase family. As to quaternary structure, homotetramer. It depends on Zn(2+) as a cofactor. Post-translationally, carboxylation allows a single lysine to coordinate two zinc ions.

The enzyme catalyses (S)-allantoin + H2O = allantoate + H(+). It functions in the pathway nitrogen metabolism; (S)-allantoin degradation; allantoate from (S)-allantoin: step 1/1. Functionally, catalyzes the conversion of allantoin (5-ureidohydantoin) to allantoic acid by hydrolytic cleavage of the five-member hydantoin ring. In Escherichia coli O127:H6 (strain E2348/69 / EPEC), this protein is Allantoinase.